The primary structure comprises 687 residues: Chloride channel protein ClC-Ka (687 aa).

4 helical membrane-spanning segments follow: residues 52–72 (FLMT…FALG), 161–181 (LFLG…AYLG), 202–222 (VAGA…GVLF), and 236–256 (YWRG…LAVF). Positions 259, 261, 278, and 281 each coordinate Ca(2+). The next 6 membrane-spanning stretches (helical) occupy residues 282–302 (IFFF…YLYC), 325–345 (PLYA…PGVG), 396–416 (FTIF…LILA), 417–437 (TTIP…AAIG), 452–472 (IVAG…AGAA), and 486–506 (LLAF…MAVL). At 507-687 (AANAIAQSCQ…SALTNPPPAK (181 aa)) the chain is on the cytoplasmic side. CBS domains are found at residues 551-612 (MRRA…ARAS) and 628-686 (TEPV…PPPA).

This sequence belongs to the chloride channel (TC 2.A.49) family. CLCNKA subfamily. In terms of assembly, homodimer. Interacts with BSND. Expressed predominantly in the kidney.

The protein localises to the basolateral cell membrane. The catalysed reaction is chloride(in) = chloride(out). It catalyses the reaction bromide(in) = bromide(out). It carries out the reaction nitrate(in) = nitrate(out). The enzyme catalyses iodide(out) = iodide(in). Anion-selective channel permeable to small monovalent anions with ion selectivity for chloride &gt; bromide &gt; nitrate &gt; iodide. Forms a homodimeric channel where each subunit has its own ion conduction pathway. May conduct double-barreled currents controlled by two types of gates, two fast gates that control each subunit independently and a slow common gate that opens and shuts off both subunits simultaneously. Assembles with the regulatory subunit BSND/Barttin for sorting at the basolateral plasma membrane domain and functional switch to the ion conducting state. CLCNKA:BSND channels display mostly a linear current-voltage relationship with fast gating at negative potentials. Mediates transepithelial chloride transport from the lumen to interstitial compartment along the thin ascending limb of Henle's loop, contributing to generation of hypertonic medullary interstitium as a countercurrent system to achieve urine concentration. Conducts chloride currents in the stria vascularis of the inner ear to establish the endocochlear potential necessary for normal hearing. The chain is Chloride channel protein ClC-Ka (CLCNKA) from Oryctolagus cuniculus (Rabbit).